Reading from the N-terminus, the 322-residue chain is uncharacterized protein (322 aa).

Positions 34 to 286 constitute a Radical SAM core domain; it reads KFKQKIFKIP…QRLSKDKVPE (253 aa). [4Fe-4S] cluster is bound by residues C50, C58, and C61.

It belongs to the radical SAM superfamily. The cofactor is [4Fe-4S] cluster.

This is an uncharacterized protein from Methanocaldococcus jannaschii (strain ATCC 43067 / DSM 2661 / JAL-1 / JCM 10045 / NBRC 100440) (Methanococcus jannaschii).